Here is a 424-residue protein sequence, read N- to C-terminus: Vasopressin V1b receptor (424 aa).

The tract at residues 1–22 (MDSGPLWDANPTPRGTLSAPNA) is disordered. Topologically, residues 1–35 (MDSGPLWDANPTPRGTLSAPNATTPWLGRDEELAK) are extracellular. Polar residues predominate over residues 13–22 (PRGTLSAPNA). An N-linked (GlcNAc...) asparagine glycan is attached at N21. A helical membrane pass occupies residues 36 to 59 (VEIGVLATVLVLATGGNLAVLLTL). At 60–71 (GQLGRKRSRMHL) the chain is on the cytoplasmic side. Residues 72 to 93 (FVLHLALTDLAVALFQVLPQLL) form a helical membrane-spanning segment. Residues 94–108 (WDITYRFQGPDLLCR) are Extracellular-facing. A disulfide bridge links C107 with C186. Residues 109-130 (AVKYLQVLSMFASTYMLLAMTL) traverse the membrane as a helical segment. Residues 131 to 151 (DRYLAVCHPLRSLQQPGQSTY) lie on the Cytoplasmic side of the membrane. A helical transmembrane segment spans residues 152-173 (LLIAAPWLLAAIFSLPQVFIFS). The Extracellular segment spans residues 174–201 (LREVIQGSGVLDCWADFGFPWGPRAYLT). A helical membrane pass occupies residues 202 to 222 (WTTLAIFVLPVTMLTACYSLI). Residues 223–283 (CHEICKNLKV…RAKIRTVKMT (61 aa)) lie on the Cytoplasmic side of the membrane. Residues 284-303 (FVIVLAYIACWAPFFSVQMW) traverse the membrane as a helical segment. The Extracellular segment spans residues 304–321 (SVWDKNAPDEDSTNVAFT). The chain crosses the membrane as a helical span at residues 322 to 341 (ISMLLGNLNSCCNPWIYMGF). The Cytoplasmic segment spans residues 342–424 (NSHLLPRPLR…GEGTAETIIF (83 aa)). Residues 398–417 (SGRPRPEESPRDLELADGEG) form a disordered region. The segment covering 401 to 411 (PRPEESPRDLE) has biased composition (basic and acidic residues).

This sequence belongs to the G-protein coupled receptor 1 family. Vasopressin/oxytocin receptor subfamily.

It localises to the cell membrane. Receptor for arginine vasopressin. The activity of this receptor is mediated by G proteins which activate a phosphatidyl-inositol-calcium second messenger system. Its function is as follows. (Microbial infection) During SARS coronavirus-2/SARS-CoV-2 infection, may recognize and internalize the complex formed by AVP/Arg-vasopressin, SARS-CoV-2 spike protein and secreted ACE2 through DNM2/dynamin 2-dependent endocytosis. The protein is Vasopressin V1b receptor of Homo sapiens (Human).